A 427-amino-acid polypeptide reads, in one-letter code: CD209 antigen (427 aa).

Residues 1-37 lie on the Cytoplasmic side of the membrane; the sequence is MSDSKEPRLQQLGLLEEEQLRGLGFRQTRGYKSLAGC. 3 short sequence motifs (endocytosis signal) span residues 14 to 15, 16 to 18, and 31 to 34; these read LL, EEE, and YKSL. A helical; Signal-anchor for type II membrane protein membrane pass occupies residues 38 to 58; sequence LGHGPLVLQLLSFTLLAALLV. Residues 59–427 lie on the Extracellular side of the membrane; sequence QVSKVPSSIS…ASATPNPPPE (369 aa). The N-linked (GlcNAc...) asparagine glycan is linked to Asn80. 8 consecutive repeat copies span residues 96 to 118, 119 to 141, 142 to 164, 165 to 187, 188 to 210, 211 to 233, 234 to 256, and 257 to 280. Positions 96–280 are 8 X approximate tandem repeats; it reads KLQEIYQELT…AVERLCRRCP (185 aa). Intrachain disulfides connect Cys279-Cys290, Cys307-Cys400, and Cys379-Cys392. In terms of domain architecture, C-type lectin spans 286–401; it reads FQGNCYFMSN…CNLAKFWICK (116 aa). Glu370, Asn372, Val374, Glu377, Asn388, and Asp389 together coordinate Ca(2+).

As to quaternary structure, homotetramer. Interacts with C1QBP; the interaction is indicative for a C1q:C1QBP:CD209 signaling complex. Interacts with ICAM2 and ICAM3 by binding to mannose-like carbohydrates. Interacts (via C-type lectin domain) with CEACAM1 (via Lewis X moieties); this interaction is regulated by the glycosylation pattern of CEACAM1 on cell types and regulates contact between dendritic cells and neutrophils.

It is found in the membrane. In terms of biological role, pathogen-recognition receptor expressed on the surface of immature dendritic cells (DCs) and involved in initiation of primary immune response. Thought to mediate the endocytosis of pathogens which are subsequently degraded in lysosomal compartments. The receptor returns to the cell membrane surface and the pathogen-derived antigens are presented to resting T-cells via MHC class II proteins to initiate the adaptive immune response. Probably recognizes in a calcium-dependent manner high mannose N-linked oligosaccharides in a variety of pathogen antigens. On DCs it is a high affinity receptor for ICAM2 and ICAM3 by binding to mannose-like carbohydrates. May act as a DC rolling receptor that mediates transendothelial migration of DC presursors from blood to tissues by binding endothelial ICAM2. Seems to regulate DC-induced T-cell proliferation by binding to ICAM3 on T-cells in the immunological synapse formed between DC and T-cells. The sequence is that of CD209 antigen (CD209) from Gorilla gorilla gorilla (Western lowland gorilla).